The primary structure comprises 637 residues: 1-deoxy-D-xylulose-5-phosphate synthase (637 aa).

Thiamine diphosphate is bound by residues H73 and 113-115; that span reads SHA. D144 contacts Mg(2+). Thiamine diphosphate contacts are provided by residues 145–146, N174, Y285, and E366; that span reads GA. Residue N174 participates in Mg(2+) binding.

Belongs to the transketolase family. DXPS subfamily. As to quaternary structure, homodimer. Mg(2+) serves as cofactor. Thiamine diphosphate is required as a cofactor.

It catalyses the reaction D-glyceraldehyde 3-phosphate + pyruvate + H(+) = 1-deoxy-D-xylulose 5-phosphate + CO2. It participates in metabolic intermediate biosynthesis; 1-deoxy-D-xylulose 5-phosphate biosynthesis; 1-deoxy-D-xylulose 5-phosphate from D-glyceraldehyde 3-phosphate and pyruvate: step 1/1. Functionally, catalyzes the acyloin condensation reaction between C atoms 2 and 3 of pyruvate and glyceraldehyde 3-phosphate to yield 1-deoxy-D-xylulose-5-phosphate (DXP). The polypeptide is 1-deoxy-D-xylulose-5-phosphate synthase (Streptomyces griseus subsp. griseus (strain JCM 4626 / CBS 651.72 / NBRC 13350 / KCC S-0626 / ISP 5235)).